The following is a 283-amino-acid chain: E3 ubiquitin-protein ligase MARCHF5 (283 aa).

The RING-CH-type zinc finger occupies 9–78 (VQQMLDRSCW…PQCNAEYLIV (70 aa)). Cys17, Cys20, Cys36, Cys38, His46, Cys49, Cys68, and Cys71 together coordinate Zn(2+). The next 4 helical transmembrane spans lie at 102–122 (FAAA…YGAV), 142–162 (PLFL…GKMI), 212–232 (ILCG…LMFS), and 241–261 (TILG…YFKQ).

The protein localises to the mitochondrion outer membrane. It localises to the endoplasmic reticulum membrane. The enzyme catalyses S-ubiquitinyl-[E2 ubiquitin-conjugating enzyme]-L-cysteine + [acceptor protein]-L-lysine = [E2 ubiquitin-conjugating enzyme]-L-cysteine + N(6)-ubiquitinyl-[acceptor protein]-L-lysine.. Its pathway is protein modification; protein ubiquitination. Its function is as follows. Mitochondrial E3 ubiquitin-protein ligase that plays a crucial role in the control of mitochondrial morphology by acting as a positive regulator of mitochondrial fission. May play a role in the prevention of cell senescence acting as a regulator of mitochondrial quality control. The chain is E3 ubiquitin-protein ligase MARCHF5 (marchf5) from Xenopus laevis (African clawed frog).